Consider the following 188-residue polypeptide: Ribosome maturation factor RimP (188 aa).

The protein belongs to the RimP family.

Its subcellular location is the cytoplasm. In terms of biological role, required for maturation of 30S ribosomal subunits. This chain is Ribosome maturation factor RimP, found in Erythrobacter litoralis (strain HTCC2594).